The primary structure comprises 342 residues: Dihydroorotase (342 aa).

Zn(2+) is bound by residues histidine 13 and histidine 15. Substrate contacts are provided by residues histidine 15 to arginine 17 and asparagine 41. Zn(2+) is bound by residues lysine 97, histidine 134, and histidine 172. The residue at position 97 (lysine 97) is an N6-carboxylysine. Substrate is bound at residue histidine 134. Leucine 217 is a binding site for substrate. Aspartate 245 is a Zn(2+) binding site. Aspartate 245 is a catalytic residue. Residues histidine 249 and alanine 261 each contribute to the substrate site.

This sequence belongs to the metallo-dependent hydrolases superfamily. DHOase family. Class II DHOase subfamily. As to quaternary structure, homodimer. It depends on Zn(2+) as a cofactor.

The catalysed reaction is (S)-dihydroorotate + H2O = N-carbamoyl-L-aspartate + H(+). It participates in pyrimidine metabolism; UMP biosynthesis via de novo pathway; (S)-dihydroorotate from bicarbonate: step 3/3. Its function is as follows. Catalyzes the reversible cyclization of carbamoyl aspartate to dihydroorotate. This Shewanella loihica (strain ATCC BAA-1088 / PV-4) protein is Dihydroorotase.